Here is a 3068-residue protein sequence, read N- to C-terminus: Highly reducing polyketide synthase 17 (3068 aa).

The Ketosynthase family 3 (KS3) domain occupies 100–526 (IEPIAIVGAS…GTNAHAIMER (427 aa)). Residues C274, H410, and H449 each act as for beta-ketoacyl synthase activity in the active site. Positions 627-938 (YVFTGQGAQW…LAGPIRQCLA (312 aa)) are malonyl-CoA:ACP transacylase (MAT) domain. S721 functions as the For malonyltransferase activity in the catalytic mechanism. Residues 1027-1160 (HHLLGVRMTE…GVVEGVMTLD (134 aa)) are N-terminal hotdog fold. A dehydratase (DH) domain region spans residues 1027 to 1311 (HHLLGVRMTE…RASNIDMTIV (285 aa)). The PKS/mFAS DH domain occupies 1027-1334 (HHLLGVRMTE…SRSLAAHVDG (308 aa)). The active-site Proton acceptor; for dehydratase activity is the H1059. A C-terminal hotdog fold region spans residues 1179–1334 (NRTMVIPEEL…SRSLAAHVDG (156 aa)). D1247 functions as the Proton donor; for dehydratase activity in the catalytic mechanism. An enoylreductase (ER) domain region spans residues 1735–2037 (LGPVQSSKGD…LVRQGGKVIL (303 aa)). The tract at residues 2062–2240 (AAYVVAGGMG…FLSMNIGWIE (179 aa)) is catalytic ketoreductase (KR) domain. The Carrier domain maps to 2345–2423 (TIIDFISSAI…DLAEKVASRS (79 aa)). S2383 carries the O-(pantetheine 4'-phosphoryl)serine modification. The interval 2831–3062 (FDVASLGLRS…SCMITSLLED (232 aa)) is choline/carnitine acyltransferase (cAT) domain.

The protein operates within secondary metabolite biosynthesis. In terms of biological role, highly reducing polyketide synthase; part of the gene cluster that mediates the biosynthesis of (2Z,4E,6E,10E)-9-hydroxydodeca-2,4,6,10-tetraenoic acid (BAA), (2E,4E,6E,10E)-9-hydroxydodeca-2,4,6,10-tetraenoic acid (BAB), and (2Z,4E,6E)-octa-2,4,6-trienedioic acid (PBA). The highly reducing polyketide synthase Ba17a is sufficent to produce PBA and BAA. The still to be characterized protein Ba17b leads to an increased production of BAA as well as to the production of the new compound BAB. BAA does not possess insecticidal activity against G.mellonella larvae, however, both BAA and BAB increase the growth of Candida albicans and BAA can mitigate the fungicidal effects of fluconazole over C.albicans, suggesting that generalist pathogens such as M.anisopliae, can potentially manipulate the yeast microbiota found in arthropods (and anywhere else) by the activity of compounds as BAA and BAB. This Metarhizium anisopliae (Entomophthora anisopliae) protein is Highly reducing polyketide synthase 17.